The sequence spans 417 residues: Putative competence-damage inducible protein (417 aa).

This sequence belongs to the CinA family.

This Oceanobacillus iheyensis (strain DSM 14371 / CIP 107618 / JCM 11309 / KCTC 3954 / HTE831) protein is Putative competence-damage inducible protein.